Reading from the N-terminus, the 310-residue chain is METQNHTTVTEFILLGLTESSTLRVILFMVFLGIYTVTLVGNFSIISLIRSCPQLHTPMYLFLSHLAFVDIGFSTSITPTMFKGFLGNRLVLSVAACIAQFCITVTFGTVECFLLAVMAYDRYVAICSPLLYSTHMSPRICFLLVGASYVGGCVNSGAFTSCLSILSFCGPNQIDHFFCDFPAVLKLSCSDVSIIGIIPSISAGSIIVITVFVIAVSYAYILITILKMRSTEGRQKAFSTCTSHLTAVTLYYGTITFIYVMPKSNYSTAQNKILSVFYTVVIPMLNPLIYSLRNRDVKEALRKAIIRIFP.

The Extracellular portion of the chain corresponds to 1 to 25 (METQNHTTVTEFILLGLTESSTLRV). Asparagine 5 carries N-linked (GlcNAc...) asparagine glycosylation. Residues 26–46 (ILFMVFLGIYTVTLVGNFSII) form a helical membrane-spanning segment. Topologically, residues 47-54 (SLIRSCPQ) are cytoplasmic. Residues 55–75 (LHTPMYLFLSHLAFVDIGFST) traverse the membrane as a helical segment. Residues 76-99 (SITPTMFKGFLGNRLVLSVAACIA) are Extracellular-facing. Residues cysteine 97 and cysteine 189 are joined by a disulfide bond. Residues 100–120 (QFCITVTFGTVECFLLAVMAY) traverse the membrane as a helical segment. Residues 121–133 (DRYVAICSPLLYS) lie on the Cytoplasmic side of the membrane. Residues 134-154 (THMSPRICFLLVGASYVGGCV) traverse the membrane as a helical segment. Residues 155-196 (NSGAFTSCLSILSFCGPNQIDHFFCDFPAVLKLSCSDVSIIG) lie on the Extracellular side of the membrane. A helical membrane pass occupies residues 197 to 217 (IIPSISAGSIIVITVFVIAVS). The Cytoplasmic portion of the chain corresponds to 218–237 (YAYILITILKMRSTEGRQKA). A helical transmembrane segment spans residues 238 to 258 (FSTCTSHLTAVTLYYGTITFI). The Extracellular segment spans residues 259-271 (YVMPKSNYSTAQN). N-linked (GlcNAc...) asparagine glycosylation occurs at asparagine 265. Residues 272 to 292 (KILSVFYTVVIPMLNPLIYSL) form a helical membrane-spanning segment. The Cytoplasmic portion of the chain corresponds to 293–310 (RNRDVKEALRKAIIRIFP).

It belongs to the G-protein coupled receptor 1 family.

It is found in the cell membrane. Potential odorant receptor. This Mus musculus (Mouse) protein is Olfactory receptor 5P55.